Reading from the N-terminus, the 297-residue chain is 6-dehydroglucose reductase (297 aa).

NADP(+)-binding residues include tryptophan 20, arginine 21, and aspartate 49. Catalysis depends on tyrosine 54, which acts as the Proton donor. D-glucose contacts are provided by tyrosine 54, lysine 98, histidine 129, and arginine 130. Residues serine 159, asparagine 160, glutamine 181, serine 211, leucine 213, glycine 215, glycine 261, threonine 262, asparagine 263, and arginine 267 each contribute to the NADP(+) site.

The protein belongs to the aldo/keto reductase family. Homotrimer.

The enzyme catalyses D-glucose + NADP(+) = 6-dehydro-D-glucose + NADPH + H(+). Part of the sulfoquinovose monooxygenase (sulfo-SMO) pathway, a D-sulfoquinovose degradation pathway that enables the complete utilization of all carbons within sulfoquinovose (SQ) with concomitant production of inorganic sulfite. Catalyzes the NADP-dependent reduction of 6-dehydro-D-glucose to D-glucose. Cannot use NADH. This chain is 6-dehydroglucose reductase, found in Agrobacterium fabrum (strain C58 / ATCC 33970) (Agrobacterium tumefaciens (strain C58)).